Consider the following 186-residue polypeptide: MLKQKYKSEVVSALVKEFQYSSVMEVPRIEKIVVNMTAGKEVNNSKAIEEVLNELTLITGQKPYQTVAKKSNAAWKLRKNMPMGGKVTLRKDRMWDFLEKLITVAMPRIRDFRGANHKAFDKNGNFALGIKEEIIFPEIEFDKIRRNKGLDVIVVTTAKTAKESKRLLELLGMPFDDKKHTKESAK.

It belongs to the universal ribosomal protein uL5 family. Part of the 50S ribosomal subunit; part of the 5S rRNA/L5/L18/L25 subcomplex. Contacts the 5S rRNA and the P site tRNA. Forms a bridge to the 30S subunit in the 70S ribosome.

In terms of biological role, this is one of the proteins that bind and probably mediate the attachment of the 5S RNA into the large ribosomal subunit, where it forms part of the central protuberance. In the 70S ribosome it contacts protein S13 of the 30S subunit (bridge B1b), connecting the 2 subunits; this bridge is implicated in subunit movement. Contacts the P site tRNA; the 5S rRNA and some of its associated proteins might help stabilize positioning of ribosome-bound tRNAs. In Mycoplasmopsis synoviae (strain 53) (Mycoplasma synoviae), this protein is Large ribosomal subunit protein uL5.